We begin with the raw amino-acid sequence, 887 residues long: Alanine--tRNA ligase (887 aa).

Positions 564, 568, 676, and 680 each coordinate Zn(2+).

Belongs to the class-II aminoacyl-tRNA synthetase family. Zn(2+) is required as a cofactor.

It is found in the cytoplasm. It carries out the reaction tRNA(Ala) + L-alanine + ATP = L-alanyl-tRNA(Ala) + AMP + diphosphate. Catalyzes the attachment of alanine to tRNA(Ala) in a two-step reaction: alanine is first activated by ATP to form Ala-AMP and then transferred to the acceptor end of tRNA(Ala). Also edits incorrectly charged Ser-tRNA(Ala) and Gly-tRNA(Ala) via its editing domain. The sequence is that of Alanine--tRNA ligase from Sinorhizobium medicae (strain WSM419) (Ensifer medicae).